The chain runs to 227 residues: Glial cell line-derived neurotrophic factor (227 aa).

The signal sequence occupies residues 1–19; that stretch reads MKLWAILAVCILLLSSVSS. The propeptide occupies 20-93; the sequence is IPLPSNWLAG…EFIQDTIKRL (74 aa). Disordered regions lie at residues 32–61 and 93–113; these read RSHLPDPQEGEDQVFGMDGAVPEDPTANMA and LKRSSNKQPPSRRDRGRQSLA. 3 disulfides stabilise this stretch: C134/C195, C161/C224, and C165/C226. N-linked (GlcNAc...) asparagine glycosylation is found at N142 and N178.

Belongs to the TGF-beta family. GDNF subfamily. In terms of assembly, homodimer; disulfide-linked. Interacts with GFRA1 coreceptor and RET: forms a 2:2:2 ternary complex composed of GDNF ligand, GFRA1 and RET receptor. From stage 22, expressed in somites and the pronephros. At stage 24 and 26, expressed in the pharyngeal arches I-III. At stage 31, expression in the eye, central nervous system and pharyngeal arches IV and V increases. Up to stage 34, expression becomes intense at the oral cavity and lateral line structures. At this stage, expression weakens in the pharyngeal arches, and increases in the epibranchial arches. Expressed in the digestive tract in stage 34 embryos.

The protein localises to the secreted. Neurotrophic factor that enhances survival and morphological differentiation of dopaminergic neurons and increases their high-affinity dopamine uptake. Acts by binding to its coreceptor, GFRA1, leading to autophosphorylation and activation of the RET receptor. In Xenopus laevis (African clawed frog), this protein is Glial cell line-derived neurotrophic factor.